The following is a 78-amino-acid chain: Large ribosomal subunit protein bL31 (78 aa).

It belongs to the bacterial ribosomal protein bL31 family. Type A subfamily. In terms of assembly, part of the 50S ribosomal subunit.

Binds the 23S rRNA. The polypeptide is Large ribosomal subunit protein bL31 (rpmE) (Rickettsia conorii (strain ATCC VR-613 / Malish 7)).